A 419-amino-acid chain; its full sequence is Interferon regulatory factor 3 (419 aa).

T3 bears the Phosphothreonine mark. The IRF tryptophan pentad repeat DNA-binding region spans 5-111 (KPRILPWLVS…DPHKVYEFVT (107 aa)). At S14 the chain carries Phosphoserine. The residue at position 75 (T75) is a Phosphothreonine. Phosphoserine occurs at positions 97, 123, and 135. Positions 140-419 (PKLFDGLILG…DMDFQATGNI (280 aa)) are mediates interaction with ZDHHC11. K188 is covalently cross-linked (Glycyl lysine isopeptide (Lys-Gly) (interchain with G-Cter in ISG15)). Residues 194–353 (EQWEFEVTAF…MWPQDQPWVK (160 aa)) are interaction with HERC5. Phosphothreonine is present on residues T230, T237, and T246. Residues K353 and K359 each participate in a glycyl lysine isopeptide (Lys-Gly) (interchain with G-Cter in ISG15) cross-link. Residue K359 is modified to N6-acetyllysine. Position 378 is a phosphoserine (S378). Residue S379 is modified to Diphosphoserine. At S379 the chain carries Phosphoserine; by TBK1. Phosphoserine; by IKKE is present on S388. S390 is modified (phosphoserine). The residue at position 396 (T396) is a Phosphothreonine.

The protein belongs to the IRF family. Monomer. Homodimer; phosphorylation-induced. Interacts (when phosphorylated) with CREBBP. Interacts with MAVS (via phosphorylated pLxIS motif). Interacts with TICAM1 (via phosphorylated pLxIS motif). Interacts with STING1 (via phosphorylated pLxIS motif). Interacts with IKBKE and TBK1. Interacts with TICAM2. Interacts with RBCK1. Interacts with HERC5. Interacts with DDX3X; the interaction allows the phosphorylation and activation of IRF3 by IKBKE. Interacts with TRIM21 and ULK1, in the presence of TRIM21; this interaction leads to IRF3 degradation by autophagy. Interacts with RIOK3; RIOK3 probably mediates the interaction of TBK1 with IRF3. Interacts with ILRUN; the interaction inhibits IRF3 binding to its DNA consensus sequence. Interacts with LYAR; this interaction impairs IRF3 DNA-binding activity. Interacts with TRAF3. Interacts with ZDHHC11; ZDHHC11 recruits IRF3 to STING1 upon DNA virus infection and thereby promotes IRF3 activation. Interacts with HSP90AA1; the interaction mediates IRF3 association with TOMM70. Interacts with BCL2; the interaction decreases upon Sendai virus infection. Interacts with BAX; the interaction is direct, increases upon virus infection and mediates the formation of the apoptosis complex TOMM70:HSP90AA1:IRF3:BAX. Interacts with DDX56. Interacts with NBR1. Post-translationally, constitutively phosphorylated on many Ser/Thr residues. Activated following phosphorylation by TBK1 and IKBKE. Innate adapter proteins, such as MAVS, STING1 or TICAM1, are first activated by viral RNA, cytosolic DNA, and bacterial lipopolysaccharide (LPS), respectively, leading to activation of the kinases TBK1 and IKBKE. These kinases then phosphorylate the adapter proteins on the pLxIS motif, leading to recruitment of IRF3, thereby licensing IRF3 for phosphorylation by TBK1. Phosphorylation at Ser-379 is followed by pyrophosphorylation at the same residue, promoting phosphorylation at Ser-388. Phosphorylated IRF3 dissociates from the adapter proteins, dimerizes, and then enters the nucleus to induce IFNs. In terms of processing, pyrophosphorylated by UAP1 following phosphorylation at Ser-379 by TBK1. Pyrophosphorylation promotes subsequent phosphorylation at Ser-388, leading to homodimerization of IRF3. Acetylation at Lys-359 by KAT8 inhibits recruimtent to promoters and transcription factor activity. Acetylation by KAT8 is promoted by phosphorylation at Ser-388. Post-translationally, ubiquitinated; ubiquitination involves RBCK1 leading to proteasomal degradation. Polyubiquitinated; ubiquitination involves TRIM21 leading to proteasomal degradation. Ubiquitinated by UBE3C, leading to its degradation. Deubiquitinated by USP5 on both 'Lys-48'-linked unanchored and 'Lys-63'-linked anchored polyubiquitin, leading to inhibition of anti-RNA viral innate immunity. In terms of processing, ISGylated by HERC5 resulting in sustained IRF3 activation and in the inhibition of IRF3 ubiquitination by disrupting PIN1 binding. The phosphorylation state of IRF3 does not alter ISGylation. Proteolytically cleaved by apoptotic caspases during apoptosis, leading to its inactivation. Cleavage by CASP3 during virus-induced apoptosis inactivates it, preventing cytokine overproduction.

The protein localises to the cytoplasm. It localises to the nucleus. Its subcellular location is the mitochondrion. In the absence of viral infection, maintained as a monomer in an autoinhibited state. Phosphorylation by TBK1 and IKBKE disrupts this autoinhibition leading to the liberation of the DNA-binding and dimerization activities and its nuclear localization where it can activate type I IFN and ISG genes. Phosphorylation and activation follow the following steps: innate adapter proteins, such as MAVS, STING1 or TICAM1, are first activated by viral RNA, cytosolic DNA and bacterial lipopolysaccharide (LPS), respectively, leading to activation of the kinases TBK1 and IKBKE. These kinases then phosphorylate the adapter proteins on their pLxIS motif, leading to recruitment of IRF3, thereby licensing IRF3 for phosphorylation by TBK1. Phosphorylated IRF3 dissociates from the adapter proteins, dimerizes, and then enters the nucleus to induce IFNs. In terms of biological role, key transcriptional regulator of type I interferon (IFN)-dependent immune responses which plays a critical role in the innate immune response against DNA and RNA viruses. Regulates the transcription of type I IFN genes (IFN-alpha and IFN-beta) and IFN-stimulated genes (ISG) by binding to an interferon-stimulated response element (ISRE) in their promoters. Acts as a more potent activator of the IFN-beta (IFNB) gene than the IFN-alpha (IFNA) gene and plays a critical role in both the early and late phases of the IFNA/B gene induction. Found in an inactive form in the cytoplasm of uninfected cells and following viral infection, double-stranded RNA (dsRNA), or toll-like receptor (TLR) signaling, is phosphorylated by IKBKE and TBK1 kinases. This induces a conformational change, leading to its dimerization and nuclear localization and association with CREB binding protein (CREBBP) to form dsRNA-activated factor 1 (DRAF1), a complex which activates the transcription of the type I IFN and ISG genes. Can activate distinct gene expression programs in macrophages and can induce significant apoptosis in primary macrophages. The chain is Interferon regulatory factor 3 (Irf3) from Mus musculus (Mouse).